Reading from the N-terminus, the 125-residue chain is Histone H2B type 1 (125 aa).

The tract at residues 1 to 36 (MPEPAKSRPAPKKGSKKAVTKAQKKDGKERKRSRKE) is disordered. N-acetylproline is present on Pro-2. At Glu-3 the chain carries ADP-ribosyl glutamic acid. N6-(2-hydroxyisobutyryl)lysine; alternate is present on Lys-6. At Lys-6 the chain carries N6-(beta-hydroxybutyryl)lysine; alternate. N6-acetyllysine; alternate is present on Lys-6. At Lys-6 the chain carries N6-butyryllysine; alternate. Lys-6 is subject to N6-crotonyllysine; alternate. Lys-6 is subject to N6-lactoyllysine; alternate. A Glycyl lysine isopeptide (Lys-Gly) (interchain with G-Cter in SUMO2); alternate cross-link involves residue Lys-6. Position 7 is an ADP-ribosylserine (Ser-7). The span at 9–19 (PAPKKGSKKAV) shows a compositional bias: basic residues. Lys-12 carries the post-translational modification N6-(beta-hydroxybutyryl)lysine; alternate. Residues Lys-12 and Lys-13 each carry the N6-acetyllysine; alternate modification. N6-crotonyllysine; alternate occurs at positions 12 and 13. Lys-12 carries the post-translational modification N6-lactoyllysine; alternate. Lys-13 carries the post-translational modification N6-(2-hydroxyisobutyryl)lysine; alternate. Residue Ser-15 is modified to Phosphoserine; by STK4/MST1. Lys-16, Lys-17, Lys-21, and Lys-24 each carry N6-acetyllysine; alternate. Lys-16, Lys-17, Lys-21, and Lys-24 each carry N6-crotonyllysine; alternate. N6-lactoyllysine; alternate is present on residues Lys-16, Lys-17, Lys-21, and Lys-24. Lys-17 is subject to N6-glutaryllysine; alternate. N6-(2-hydroxyisobutyryl)lysine; alternate occurs at positions 21 and 24. Lys-21 carries the post-translational modification N6-(beta-hydroxybutyryl)lysine; alternate. N6-butyryllysine; alternate is present on Lys-21. Residue Lys-21 forms a Glycyl lysine isopeptide (Lys-Gly) (interchain with G-Cter in SUMO2); alternate linkage. Residue Lys-25 is modified to N6-(2-hydroxyisobutyryl)lysine. Lys-35 carries the post-translational modification N6-(2-hydroxyisobutyryl)lysine; alternate. Lys-35 is modified (N6-(beta-hydroxybutyryl)lysine; alternate). Lys-35 is subject to N6-crotonyllysine; alternate. Lys-35 is modified (N6-glutaryllysine; alternate). At Lys-35 the chain carries N6-succinyllysine; alternate. Lys-35 is covalently cross-linked (Glycyl lysine isopeptide (Lys-Gly) (interchain with G-Cter in ubiquitin); alternate). Position 36 is a polyADP-ribosyl glutamic acid (Glu-36). At Ser-37 the chain carries Phosphoserine; by AMPK. Lys-44, Lys-47, and Lys-58 each carry N6-(2-hydroxyisobutyryl)lysine; alternate. The residue at position 44 (Lys-44) is an N6-lactoyllysine; alternate. 2 positions are modified to N6-glutaryllysine; alternate: Lys-44 and Lys-47. Lys-47 bears the N6-methyllysine; alternate mark. Lys-58 is modified (N6,N6-dimethyllysine; alternate). Position 79 is a dimethylated arginine (Arg-79). Lys-85 carries the N6-(2-hydroxyisobutyryl)lysine; alternate modification. An N6-acetyllysine; alternate modification is found at Lys-85. Lys-85 is modified (N6-lactoyllysine; alternate). Lys-85 is modified (N6,N6,N6-trimethyllysine; alternate). Omega-N-methylarginine is present on residues Arg-86 and Arg-92. Lys-108 carries the post-translational modification N6-(2-hydroxyisobutyryl)lysine; alternate. Lys-108 is subject to N6-lactoyllysine; alternate. The residue at position 108 (Lys-108) is an N6-glutaryllysine; alternate. Lys-108 carries the post-translational modification N6-methyllysine; alternate. O-linked (GlcNAc) serine glycosylation occurs at Ser-112. At Thr-115 the chain carries Phosphothreonine. N6-(2-hydroxyisobutyryl)lysine; alternate is present on residues Lys-116 and Lys-120. Lys-116 is modified (N6-(beta-hydroxybutyryl)lysine; alternate). N6-lactoyllysine; alternate is present on residues Lys-116 and Lys-120. 2 positions are modified to N6-glutaryllysine; alternate: Lys-116 and Lys-120. N6-succinyllysine; alternate occurs at positions 116 and 120. Lys-116 carries the N6-methylated lysine; alternate modification. Residue Lys-120 forms a Glycyl lysine isopeptide (Lys-Gly) (interchain with G-Cter in ubiquitin); alternate linkage.

The protein belongs to the histone H2B family. As to quaternary structure, the nucleosome is a histone octamer containing two molecules each of H2A, H2B, H3 and H4 assembled in one H3-H4 heterotetramer and two H2A-H2B heterodimers. The octamer wraps approximately 147 bp of DNA. Monoubiquitination at Lys-35 (H2BK34Ub) by the MSL1/MSL2 dimer is required for histone H3 'Lys-4' (H3K4me) and 'Lys-79' (H3K79me) methylation and transcription activation at specific gene loci, such as HOXA9 and MEIS1 loci. Similarly, monoubiquitination at Lys-120 (H2BK120Ub) by the RNF20/40 complex gives a specific tag for epigenetic transcriptional activation and is also prerequisite for histone H3 'Lys-4' and 'Lys-79' methylation. It also functions cooperatively with the FACT dimer to stimulate elongation by RNA polymerase II. H2BK120Ub also acts as a regulator of mRNA splicing: deubiquitination by USP49 is required for efficient cotranscriptional splicing of a large set of exons. Post-translationally, phosphorylated on Ser-15 (H2BS14ph) by STK4/MST1 during apoptosis; which facilitates apoptotic chromatin condensation. Also phosphorylated on Ser-15 in response to DNA double strand breaks (DSBs), and in correlation with somatic hypermutation and immunoglobulin class-switch recombination. Phosphorylation at Ser-37 (H2BS36ph) by AMPK in response to stress promotes transcription. In terms of processing, ADP-ribosylated by PARP1 or PARP2 on Ser-7 (H2BS6ADPr) in response to DNA damage. H2BS6ADPr promotes recruitment of CHD1L. Mono-ADP-ribosylated on Glu-3 (H2BE2ADPr) by PARP3 in response to single-strand breaks. Poly ADP-ribosylation on Glu-36 (H2BE35ADPr) by PARP1 regulates adipogenesis: it inhibits phosphorylation at Ser-37 (H2BS36ph), thereby blocking expression of pro-adipogenetic genes. Crotonylation (Kcr) is specifically present in male germ cells and marks testis-specific genes in post-meiotic cells, including X-linked genes that escape sex chromosome inactivation in haploid cells. Crotonylation marks active promoters and enhancers and confers resistance to transcriptional repressors. It is also associated with post-meiotically activated genes on autosomes. Post-translationally, glcNAcylation at Ser-112 promotes monoubiquitination of Lys-120. It fluctuates in response to extracellular glucose, and associates with transcribed genes. In terms of processing, lactylated in macrophages by EP300/P300 by using lactoyl-CoA directly derived from endogenous or exogenous lactate, leading to stimulates gene transcription.

It is found in the nucleus. The protein resides in the chromosome. In terms of biological role, core component of nucleosome. Nucleosomes wrap and compact DNA into chromatin, limiting DNA accessibility to the cellular machineries which require DNA as a template. Histones thereby play a central role in transcription regulation, DNA repair, DNA replication and chromosomal stability. DNA accessibility is regulated via a complex set of post-translational modifications of histones, also called histone code, and nucleosome remodeling. Its function is as follows. Has broad antibacterial activity. May contribute to the formation of the functional antimicrobial barrier of the colonic epithelium, and to the bactericidal activity of amniotic fluid. The protein is Histone H2B type 1 of Rattus norvegicus (Rat).